An 899-amino-acid chain; its full sequence is Translation initiation factor IF-2 (899 aa).

Disordered stretches follow at residues 115–137, 170–189, and 262–309; these read EAKA…LQTE, RGGG…EQKK, and DREI…HGFE. The 170-residue stretch at 399–568 folds into the tr-type G domain; that stretch reads TRPPVVTIMG…LIQSELMELK (170 aa). Residues 408 to 415 form a G1 region; sequence GHVDHGKT. Residue 408-415 coordinates GTP; sequence GHVDHGKT. A G2 region spans residues 433–437; sequence GITQH. The tract at residues 454-457 is G3; the sequence is DTPG. Residues 454–458 and 508–511 each bind GTP; these read DTPGH and NKMD. The segment at 508–511 is G4; it reads NKMD. The G5 stretch occupies residues 544–546; it reads SAH.

It belongs to the TRAFAC class translation factor GTPase superfamily. Classic translation factor GTPase family. IF-2 subfamily.

The protein localises to the cytoplasm. In terms of biological role, one of the essential components for the initiation of protein synthesis. Protects formylmethionyl-tRNA from spontaneous hydrolysis and promotes its binding to the 30S ribosomal subunits. Also involved in the hydrolysis of GTP during the formation of the 70S ribosomal complex. This Acinetobacter baumannii (strain SDF) protein is Translation initiation factor IF-2.